A 211-amino-acid polypeptide reads, in one-letter code: Small ribosomal subunit protein eS8 (211 aa).

It belongs to the eukaryotic ribosomal protein eS8 family.

This chain is Small ribosomal subunit protein eS8 (rps8), found in Dictyostelium discoideum (Social amoeba).